The following is a 76-amino-acid chain: Small ribosomal subunit protein bS18 (76 aa).

Belongs to the bacterial ribosomal protein bS18 family. As to quaternary structure, part of the 30S ribosomal subunit. Forms a tight heterodimer with protein bS6.

Functionally, binds as a heterodimer with protein bS6 to the central domain of the 16S rRNA, where it helps stabilize the platform of the 30S subunit. This Xanthomonas campestris pv. campestris (strain 8004) protein is Small ribosomal subunit protein bS18.